We begin with the raw amino-acid sequence, 195 residues long: MRNAEVSRNTLETKIAVAINLDGTGVSKLNSGVGFFDHMLDQIARHGMMDISVECQGDLHIDAHHTVEDVGIALGQAFSRALGDKKGIRRYAHAYVPLDEALSRVVLDISGRPGLEFNVEFTRARIGEFDVDLVREFFQGFVNHAALTLHVDNLRGKNAHHQAETIFKAFGRALRAAVELDPRMVGIMPSTKGSL.

Belongs to the imidazoleglycerol-phosphate dehydratase family.

It is found in the cytoplasm. The enzyme catalyses D-erythro-1-(imidazol-4-yl)glycerol 3-phosphate = 3-(imidazol-4-yl)-2-oxopropyl phosphate + H2O. It functions in the pathway amino-acid biosynthesis; L-histidine biosynthesis; L-histidine from 5-phospho-alpha-D-ribose 1-diphosphate: step 6/9. This Aminomonas aminovorus protein is Imidazoleglycerol-phosphate dehydratase.